The chain runs to 78 residues: D-alanyl carrier protein (78 aa).

Residues 1–78 (MEFREQVLDL…KIVEALEELR (78 aa)) form the Carrier domain. An O-(pantetheine 4'-phosphoryl)serine modification is found at Ser-36.

Belongs to the DltC family. In terms of processing, 4'-phosphopantetheine is transferred from CoA to a specific serine of apo-DCP.

It localises to the cytoplasm. Its pathway is cell wall biogenesis; lipoteichoic acid biosynthesis. Carrier protein involved in the D-alanylation of lipoteichoic acid (LTA). The loading of thioester-linked D-alanine onto DltC is catalyzed by D-alanine--D-alanyl carrier protein ligase DltA. The DltC-carried D-alanyl group is further transferred to cell membrane phosphatidylglycerol (PG) by forming an ester bond, probably catalyzed by DltD. D-alanylation of LTA plays an important role in modulating the properties of the cell wall in Gram-positive bacteria, influencing the net charge of the cell wall. The sequence is that of D-alanyl carrier protein from Staphylococcus epidermidis (strain ATCC 35984 / DSM 28319 / BCRC 17069 / CCUG 31568 / BM 3577 / RP62A).